The chain runs to 165 residues: Ribosome maturation factor RimM (165 aa).

Positions 94–165 constitute a PRC barrel domain; sequence EDEFYIADLN…YVILNYQTKV (72 aa).

This sequence belongs to the RimM family. In terms of assembly, binds ribosomal protein uS19.

The protein localises to the cytoplasm. An accessory protein needed during the final step in the assembly of 30S ribosomal subunit, possibly for assembly of the head region. Essential for efficient processing of 16S rRNA. May be needed both before and after RbfA during the maturation of 16S rRNA. It has affinity for free ribosomal 30S subunits but not for 70S ribosomes. This chain is Ribosome maturation factor RimM, found in Rickettsia typhi (strain ATCC VR-144 / Wilmington).